The primary structure comprises 408 residues: Acetate kinase (408 aa).

Position 7 (Asn-7) interacts with Mg(2+). ATP is bound at residue Lys-14. Arg-91 is a binding site for substrate. The Proton donor/acceptor role is filled by Asp-148. ATP is bound by residues 208 to 212, 283 to 285, and 331 to 335; these read HLGNG, DFR, and GIGEN. Glu-384 lines the Mg(2+) pocket.

The protein belongs to the acetokinase family. Homodimer. Mg(2+) is required as a cofactor. The cofactor is Mn(2+).

Its subcellular location is the cytoplasm. It catalyses the reaction acetate + ATP = acetyl phosphate + ADP. It participates in metabolic intermediate biosynthesis; acetyl-CoA biosynthesis; acetyl-CoA from acetate: step 1/2. Catalyzes the formation of acetyl phosphate from acetate and ATP. Can also catalyze the reverse reaction. This Methanosarcina mazei (strain ATCC BAA-159 / DSM 3647 / Goe1 / Go1 / JCM 11833 / OCM 88) (Methanosarcina frisia) protein is Acetate kinase.